Here is a 339-residue protein sequence, read N- to C-terminus: Ribosome biogenesis protein BRX1 homolog (339 aa).

The interval 1 to 34 is disordered; sequence MSAYKRKRGSLPEVATNTKKAKKQLAGSEQEATA. A Brix domain is found at 53-242; sequence ERVLIFSSRG…LIKIFKGSFG (190 aa). The tract at residues 304 to 339 is disordered; sequence AEEKPQVIETEPPAPKPKMKRKDKQFKRQRMAKKRM. Over residues 320-339 the composition is skewed to basic residues; the sequence is PKMKRKDKQFKRQRMAKKRM.

The protein belongs to the BRX1 family. In terms of tissue distribution, ubiquitous.

The protein resides in the nucleus. It localises to the nucleolus. Functionally, required for biogenesis of the 60S ribosomal subunit. The polypeptide is Ribosome biogenesis protein BRX1 homolog (brix1) (Xenopus laevis (African clawed frog)).